The sequence spans 394 residues: Elongation factor Tu (394 aa).

The tr-type G domain maps to 10–204 (KPHVNVGTIG…ALDRYIPTPE (195 aa)). The tract at residues 19-26 (GHVDHGKT) is G1. 19–26 (GHVDHGKT) provides a ligand contact to GTP. Residue Thr26 coordinates Mg(2+). The segment at 60 to 64 (GITIN) is G2. Residues 81–84 (DCPG) form a G3 region. GTP-binding positions include 81 to 85 (DCPGH) and 136 to 139 (NKCD). Residues 136–139 (NKCD) are G4. Positions 174 to 176 (SAL) are G5.

It belongs to the TRAFAC class translation factor GTPase superfamily. Classic translation factor GTPase family. EF-Tu/EF-1A subfamily. In terms of assembly, monomer.

It is found in the cytoplasm. It catalyses the reaction GTP + H2O = GDP + phosphate + H(+). Functionally, GTP hydrolase that promotes the GTP-dependent binding of aminoacyl-tRNA to the A-site of ribosomes during protein biosynthesis. The protein is Elongation factor Tu of Neisseria gonorrhoeae.